The following is a 171-amino-acid chain: tRNA-splicing endonuclease (171 aa).

Residues Tyr-110, His-117, and Lys-148 contribute to the active site.

This sequence belongs to the tRNA-intron endonuclease family. Archaeal short subfamily. In terms of assembly, homotetramer; although the tetramer contains four active sites, only two participate in the cleavage. Therefore, it should be considered as a dimer of dimers.

The enzyme catalyses pretRNA = a 3'-half-tRNA molecule with a 5'-OH end + a 5'-half-tRNA molecule with a 2',3'-cyclic phosphate end + an intron with a 2',3'-cyclic phosphate and a 5'-hydroxyl terminus.. Functionally, endonuclease that removes tRNA introns. Cleaves pre-tRNA at the 5'- and 3'-splice sites to release the intron. The products are an intron and two tRNA half-molecules bearing 2',3' cyclic phosphate and 5'-OH termini. Recognizes a pseudosymmetric substrate in which 2 bulged loops of 3 bases are separated by a stem of 4 bp. The polypeptide is tRNA-splicing endonuclease (Thermococcus onnurineus (strain NA1)).